Reading from the N-terminus, the 514-residue chain is MKMWKRRGQKKSMFLSSLLVCCMFASAEYSSCGEYEFFNQTSNSCQACPQCRPGQEPNMSCGHGMKDEGFACVPCPQGKYSKGKYEICRRHKDCNALYKATVREPGTAEKDAECGPCLPGYYMLENRARNLYAMVCHSCQNAPLNTKECKKTTEAIIKPPINPGSTTVLPHPGSPGQGHLATALIIAMSTIFIMAIAIVLIIMFYILKAKPNGQACCSGQVVKAVEAQTNKLEDKKDVPDNVVIFPEKEEYDKLKASPQKTVKSENDASSENEQLLSRSIDSDEEPTSDKLRSSEATNHNLCQANVGYKPDLCLLSLGLLDHRVVCNGTPASAGSQANNTQAPNHITSSNVSSMNAINNNNKTPGMLQSRRKKILDLYARTCHVTEGLSPTELPFDCLEKASRMLSSSYSSDAAVVKTWRHLAESFGLKRDEIGGMSDGLQLFERVSTAGYSIPDLLARLVQIERLDAVESLCADVLGSNEIVALVGRQSVNSFHSQLVCPSPCTSPSPRCASV.

A signal peptide spans 1–27 (MKMWKRRGQKKSMFLSSLLVCCMFASA). At 28 to 183 (EYSSCGEYEF…SPGQGHLATA (156 aa)) the chain is on the extracellular side. 3 TNFR-Cys repeats span residues 31–72 (SCGE…GFAC), 74–114 (PCPQ…DAEC), and 116–149 (PCLP…TKEC). Disulfide bonds link cysteine 32/cysteine 45, cysteine 48/cysteine 61, cysteine 51/cysteine 72, cysteine 75/cysteine 88, cysteine 94/cysteine 114, cysteine 117/cysteine 136, and cysteine 139/cysteine 149. 2 N-linked (GlcNAc...) asparagine glycosylation sites follow: asparagine 39 and asparagine 58. The helical transmembrane segment at 184 to 204 (LIIAMSTIFIMAIAIVLIIMF) threads the bilayer. At 205–514 (YILKAKPNGQ…TSPSPRCASV (310 aa)) the chain is on the cytoplasmic side. The segment at 254-294 (LKASPQKTVKSENDASSENEQLLSRSIDSDEEPTSDKLRSS) is disordered. Polar residues predominate over residues 267-279 (DASSENEQLLSRS). In terms of domain architecture, Death spans 403–476 (RMLSSSYSSD…DAVESLCADV (74 aa)).

The protein localises to the membrane. Receptor for EDA. May mediate the activation of NF-kappa-B and JNK. This is Tumor necrosis factor receptor superfamily member EDAR (edar) from Oryzias latipes (Japanese rice fish).